The sequence spans 278 residues: Maltodextrin transport system permease protein MdxG (278 aa).

The next 6 membrane-spanning stretches (helical) occupy residues 12–32 (ICTY…LLIT), 74–94 (TLVI…LAGY), 108–128 (LIFF…AFYV), 131–151 (MLIG…GGGI), 183–203 (IFAS…ALWA), and 242–262 (VALF…LFFF). Positions 71 to 263 (YSNTLVIALS…LPICVLFFFL (193 aa)) constitute an ABC transmembrane type-1 domain.

The protein belongs to the binding-protein-dependent transport system permease family. MalFG subfamily. As to quaternary structure, the complex is composed of two ATP-binding proteins (MsmX), two transmembrane proteins (MdxF and MdxG) and a solute-binding protein (MdxE).

Its subcellular location is the cell membrane. In terms of biological role, part of the ABC transporter complex involved in maltodextrin import. Probably responsible for the translocation of the substrate across the membrane. In Bacillus subtilis (strain 168), this protein is Maltodextrin transport system permease protein MdxG (mdxG).